A 37-amino-acid chain; its full sequence is Calcitonin gene-related peptide (37 aa).

C2 and C7 are joined by a disulfide. F37 carries the phenylalanine amide modification.

This sequence belongs to the calcitonin family.

In terms of biological role, CGRP induces vasodilation. It dilates a variety of vessels including the coronary, cerebral and systemic vasculature. Its abundance in the CNS also points toward a neurotransmitter or neuromodulator role. This Pelophylax ridibundus (Marsh frog) protein is Calcitonin gene-related peptide.